Reading from the N-terminus, the 241-residue chain is Chaperone protein HifB (241 aa).

A signal peptide spans 1-27 (MGKTMFKKTLLFFTALFFTALCAFSAN).

This sequence belongs to the periplasmic pilus chaperone family.

Its subcellular location is the periplasm. Its function is as follows. Mediates assembly of pili by forming soluble multimeric complexes with pili subunits as an intermediate step in the assembly process. This protein is involved in type B pili (HifA) assembly. The protein is Chaperone protein HifB (hifB) of Haemophilus influenzae.